Reading from the N-terminus, the 176-residue chain is Large ribosomal subunit protein uL10 (176 aa).

It belongs to the universal ribosomal protein uL10 family. As to quaternary structure, part of the ribosomal stalk of the 50S ribosomal subunit. The N-terminus interacts with L11 and the large rRNA to form the base of the stalk. The C-terminus forms an elongated spine to which L12 dimers bind in a sequential fashion forming a multimeric L10(L12)X complex.

In terms of biological role, forms part of the ribosomal stalk, playing a central role in the interaction of the ribosome with GTP-bound translation factors. This chain is Large ribosomal subunit protein uL10, found in Carboxydothermus hydrogenoformans (strain ATCC BAA-161 / DSM 6008 / Z-2901).